We begin with the raw amino-acid sequence, 408 residues long: NADH-quinone oxidoreductase subunit D (408 aa).

It belongs to the complex I 49 kDa subunit family. NDH-1 is composed of 14 different subunits. Subunits NuoB, C, D, E, F, and G constitute the peripheral sector of the complex.

The protein resides in the cell inner membrane. It catalyses the reaction a quinone + NADH + 5 H(+)(in) = a quinol + NAD(+) + 4 H(+)(out). In terms of biological role, NDH-1 shuttles electrons from NADH, via FMN and iron-sulfur (Fe-S) centers, to quinones in the respiratory chain. The immediate electron acceptor for the enzyme in this species is believed to be ubiquinone. Couples the redox reaction to proton translocation (for every two electrons transferred, four hydrogen ions are translocated across the cytoplasmic membrane), and thus conserves the redox energy in a proton gradient. This Campylobacter hominis (strain ATCC BAA-381 / DSM 21671 / CCUG 45161 / LMG 19568 / NCTC 13146 / CH001A) protein is NADH-quinone oxidoreductase subunit D.